We begin with the raw amino-acid sequence, 237 residues long: UPF0173 metal-dependent hydrolase BOV_A0561 (237 aa).

It belongs to the UPF0173 family.

This Brucella ovis (strain ATCC 25840 / 63/290 / NCTC 10512) protein is UPF0173 metal-dependent hydrolase BOV_A0561.